A 510-amino-acid polypeptide reads, in one-letter code: Cytochrome P450 monooxygenase btcC (510 aa).

A helical transmembrane segment spans residues 1-21; the sequence is MSFPGVIFVVSFFPLLMGIAV. Cys-446 is a binding site for heme.

It belongs to the cytochrome P450 family. The cofactor is heme.

It localises to the membrane. It functions in the pathway secondary metabolite biosynthesis; terpenoid biosynthesis. Functionally, cytochrome P450 monooxygenase; part of the gene cluster that mediates the biosynthesis of betaestacins. The bifunctional terpene synthase btcA converts isopentenyl diphosphate (IPP) and dimethylallyl diphosphate (DMAPP) into the sesterterpene betaestacin I. The C-terminal prenyltransferase (PT) domain of btcA catalyzes formation of GFPP, whereas the N-terminal terpene cyclase (TC) domain catalyzes the cyclization of GFPP into betaestacin I. The cytochrome P450 monooxygenase btcB is then responsible for the six-step oxidation of betaestacin I to yield betaestacin II. The roles of the cytochrome P450 monooxygenase btcC and the alpha-ketoglutarate-dependent dioxygenase btcD have not been identified yet. The chain is Cytochrome P450 monooxygenase btcC from Neocamarosporium betae (Beet black rot fungus).